The primary structure comprises 528 residues: 2-isopropylmalate synthase (528 aa).

Residues 12-279 (IRIFDTTLRD…DSSINTPRIV (268 aa)) enclose the Pyruvate carboxyltransferase domain. Mn(2+) contacts are provided by Asp-21, His-214, His-216, and Asn-250. Positions 401–528 (RLASMTISDV…TTEAPAPATA (128 aa)) are regulatory domain.

This sequence belongs to the alpha-IPM synthase/homocitrate synthase family. LeuA type 1 subfamily. Homodimer. Requires Mn(2+) as cofactor.

Its subcellular location is the cytoplasm. The catalysed reaction is 3-methyl-2-oxobutanoate + acetyl-CoA + H2O = (2S)-2-isopropylmalate + CoA + H(+). It functions in the pathway amino-acid biosynthesis; L-leucine biosynthesis; L-leucine from 3-methyl-2-oxobutanoate: step 1/4. Its function is as follows. Catalyzes the condensation of the acetyl group of acetyl-CoA with 3-methyl-2-oxobutanoate (2-ketoisovalerate) to form 3-carboxy-3-hydroxy-4-methylpentanoate (2-isopropylmalate). The polypeptide is 2-isopropylmalate synthase (Stenotrophomonas maltophilia (strain R551-3)).